The sequence spans 636 residues: Capsid vertex component 2 (636 aa).

The interaction with major capsid protein/MCP stretch occupies residues 1–48 (MSLLHTFWRLPVAVFFEPHEENVLRCPERVLRRLLEDAAVAMRGGGWR). Residues 97-125 (DEGPSPRTLLQPPCRPRSSSPGTGVAGAS) form a disordered region.

This sequence belongs to the herpesviridae CVC2 protein family. In terms of assembly, heterodimerizes with CVC1. Interacts with major capsid protein/MCP and triplex capsid protein 1/TRX1 at the pentamer vertices. Interacts with the large tegument protein/LTP.

Its subcellular location is the virion. The protein localises to the host nucleus. Its function is as follows. Capsid vertex-specific component that plays a role during viral DNA encapsidation, assuring correct genome cleavage and presumably stabilizing capsids that contain full-length viral genomes. Participates in the interaction between the capsid and the tegument through interaction with the large tegument protein/LTP. The chain is Capsid vertex component 2 from Homo sapiens (Human).